A 172-amino-acid chain; its full sequence is Small ribosomal subunit protein uS5 (172 aa).

The 64-residue stretch at 17 to 80 folds into the S5 DRBM domain; that stretch reads FTEKLIKLNR…ERAKRSMVLF (64 aa).

This sequence belongs to the universal ribosomal protein uS5 family. In terms of assembly, part of the 30S ribosomal subunit. Contacts proteins S4 and S8.

Functionally, with S4 and S12 plays an important role in translational accuracy. Located at the back of the 30S subunit body where it stabilizes the conformation of the head with respect to the body. This is Small ribosomal subunit protein uS5 from Treponema pallidum (strain Nichols).